Consider the following 390-residue polypeptide: 2-oxoisovalerate dehydrogenase subunit beta, mitochondrial (390 aa).

The N-terminal 48 residues, 1 to 48 (MAAVAARAGGLLRLGAAGAERRRRGLRCAALVQGFLQPAVDDASQKRR), are a transit peptide targeting the mitochondrion. Residue Y150 participates in thiamine diphosphate binding. Positions 176, 178, 179, 226, and 229 each coordinate K(+). Position 230 is an N6-acetyllysine (K230). Residue N231 participates in K(+) binding. K239 carries the post-translational modification N6-acetyllysine.

In terms of assembly, heterotetramer of 2 alpha/BCKDHA and 2 beta chains/BCKDHB that forms the branched-chain alpha-keto acid decarboxylase (E1) component of the BCKD complex. The branched-chain alpha-ketoacid dehydrogenase is a large complex composed of three major building blocks E1, E2 and E3. It is organized around E2, a 24-meric cubic core composed of DBT, to which are associated 6 to 12 copies of E1, and approximately 6 copies of the dehydrogenase E3, a DLD dimer. It depends on thiamine diphosphate as a cofactor.

The protein resides in the mitochondrion matrix. The enzyme catalyses N(6)-[(R)-lipoyl]-L-lysyl-[protein] + 3-methyl-2-oxobutanoate + H(+) = N(6)-[(R)-S(8)-2-methylpropanoyldihydrolipoyl]-L-lysyl-[protein] + CO2. Its function is as follows. Together with BCKDHA forms the heterotetrameric E1 subunit of the mitochondrial branched-chain alpha-ketoacid dehydrogenase (BCKD) complex. The BCKD complex catalyzes the multi-step oxidative decarboxylation of alpha-ketoacids derived from the branched-chain amino-acids valine, leucine and isoleucine producing CO2 and acyl-CoA which is subsequently utilized to produce energy. The E1 subunit catalyzes the first step with the decarboxylation of the alpha-ketoacid forming an enzyme-product intermediate. A reductive acylation mediated by the lipoylamide cofactor of E2 extracts the acyl group from the E1 active site for the next step of the reaction. This is 2-oxoisovalerate dehydrogenase subunit beta, mitochondrial from Rattus norvegicus (Rat).